We begin with the raw amino-acid sequence, 420 residues long: UDP-N-acetylglucosamine 1-carboxyvinyltransferase (420 aa).

Phosphoenolpyruvate is bound at residue 22 to 23 (KN). Arg93 contacts UDP-N-acetyl-alpha-D-glucosamine. The active-site Proton donor is Cys117. The residue at position 117 (Cys117) is a 2-(S-cysteinyl)pyruvic acid O-phosphothioketal. UDP-N-acetyl-alpha-D-glucosamine is bound by residues 162–165 (KVSV), Asp307, and Ile329.

Belongs to the EPSP synthase family. MurA subfamily.

It is found in the cytoplasm. The catalysed reaction is phosphoenolpyruvate + UDP-N-acetyl-alpha-D-glucosamine = UDP-N-acetyl-3-O-(1-carboxyvinyl)-alpha-D-glucosamine + phosphate. It functions in the pathway cell wall biogenesis; peptidoglycan biosynthesis. Functionally, cell wall formation. Adds enolpyruvyl to UDP-N-acetylglucosamine. This Actinobacillus succinogenes (strain ATCC 55618 / DSM 22257 / CCUG 43843 / 130Z) protein is UDP-N-acetylglucosamine 1-carboxyvinyltransferase.